The primary structure comprises 365 residues: MAVMAPRTLLLLLSGALALTQTWAGSHSMRYFFTSVSRPGRGEPRFIAVGYVDDTQFVRFDSDAASQRMEPRAPWIEQEGPEYWDQETRNVKAQSQTDRVDLGTLRGYYNQSEAGSHTIQIMYGCDVGSDGRFLRGYRQDAYDGKDYIALNEDLRSWTAADMAAQITKRKWEAAHEAEQLRAYLDGTCVEWLRRYLENGKETLQRTDPPKTHMTHHPISDHEATLRCWALGFYPAEITLTWQRDGEDQTQDTELVETRPAGDGTFQKWAAVVVPSGEEQRYTCHVQHEGLPKPLTLRWELSSQPTIPIVGIIAGLVLLGAVITGAVVAAVMWRRKSSDRKGGSYTQAASSDSAQGSDVSLTACKV.

Positions 1–24 (MAVMAPRTLLLLLSGALALTQTWA) are cleaved as a signal peptide. The VL9 epitope stretch occupies residues 3–11 (VMAPRTLLL). The tract at residues 25–114 (GSHSMRYFFT…LRGYYNQSEA (90 aa)) is alpha-1. The Extracellular segment spans residues 25 to 308 (GSHSMRYFFT…ELSSQPTIPI (284 aa)). Residue tyrosine 31 coordinates a peptide antigen. Residue tyrosine 83 is modified to Sulfotyrosine. Positions 97 and 108 each coordinate a peptide antigen. A glycan (N-linked (GlcNAc...) asparagine) is linked at asparagine 110. The segment at 115–206 (GSHTIQIMYG…ENGKETLQRT (92 aa)) is alpha-2. Cysteine 125 and cysteine 188 are oxidised to a cystine. 5 residues coordinate a peptide antigen: aspartate 140, threonine 167, lysine 170, tyrosine 183, and tyrosine 195. The interval 207 to 298 (DPPKTHMTHH…GLPKPLTLRW (92 aa)) is alpha-3. Residues 209–295 (PKTHMTHHPI…QHEGLPKPLT (87 aa)) form the Ig-like C1-type domain. A disulfide bridge connects residues cysteine 227 and cysteine 283. The tract at residues 299–308 (ELSSQPTIPI) is connecting peptide. A helical membrane pass occupies residues 309–332 (VGIIAGLVLLGAVITGAVVAAVMW). Topologically, residues 333-365 (RRKSSDRKGGSYTQAASSDSAQGSDVSLTACKV) are cytoplasmic. The interval 339–365 (RKGGSYTQAASSDSAQGSDVSLTACKV) is disordered. A Phosphoserine modification is found at serine 343. Tyrosine 344 is subject to Phosphotyrosine. Over residues 346 to 359 (QAASSDSAQGSDVS) the composition is skewed to low complexity. Serine 349, serine 350, serine 352, serine 356, and serine 359 each carry phosphoserine.

This sequence belongs to the MHC class I family. As to quaternary structure, heterotrimer that consists of an alpha chain HLA-A, a beta chain B2M and a peptide (peptide-HLA-A-B2M). Early in biogenesis, HLA-A-B2M dimer interacts with the components of the peptide-loading complex composed of TAPBP, TAP1-TAP2, TAPBPL, PDIA3/ERP57 and CALR. Interacts with TAP1-TAP2 transporter via TAPBP; this interaction is obligatory for the loading of peptide epitopes delivered to the ER by TAP1-TAP2 transporter. Interacts with TAPBPL; TAPBPL binds peptide-free HLA-A-B2M complexes or those loaded with low affinity peptides, likely facilitating peptide exchange for higher affinity peptides. Only optimally assembled peptide-HLA-B2M trimer translocates to the surface of antigen-presenting cells, where it interacts with TCR and CD8 coreceptor on the surface of T cells. HLA-A (via polymorphic alpha-1 and alpha-2 domains) interacts with antigen-specific TCR (via CDR3 domains). One HLA-A molecule (mainly via nonpolymorphic alpha-3 domain) interacts with one CD8A homodimer (via CDR-like loop); this interaction ensures peptide-HLA-A-B2M recognition by CD8-positive T cells only. Alleles A*23:01; A*24:02 and A*32:01 interact (via Bw4 motif) with KIR3DL1 on NK cells; this interaction is direct. In terms of assembly, (Microbial infection) Interacts with HHV-8 MIR1 protein. (Microbial infection) Interacts with HTLV-1 accessory protein p12I. In terms of processing, (Microbial infection) Polyubiquitinated in a post ER compartment by interaction with human herpesvirus 8 MIR1 protein. This targets the protein for rapid degradation via the ubiquitin system. N-linked glycosylation at Asn-110. Ubiquitous.

It is found in the cell membrane. It localises to the endoplasmic reticulum membrane. In terms of biological role, antigen-presenting major histocompatibility complex class I (MHCI) molecule. In complex with B2M/beta 2 microglobulin displays primarily viral and tumor-derived peptides on antigen-presenting cells for recognition by alpha-beta T cell receptor (TCR) on HLA-A-restricted CD8-positive T cells, guiding antigen-specific T cell immune response to eliminate infected or transformed cells. May also present self-peptides derived from the signal sequence of secreted or membrane proteins, although T cells specific for these peptides are usually inactivated to prevent autoreactivity. Both the peptide and the MHC molecule are recognized by TCR, the peptide is responsible for the fine specificity of antigen recognition and MHC residues account for the MHC restriction of T cells. Typically presents intracellular peptide antigens of 8 to 13 amino acids that arise from cytosolic proteolysis via IFNG-induced immunoproteasome or via endopeptidase IDE/insulin-degrading enzyme. Can bind different peptides containing allele-specific binding motifs, which are mainly defined by anchor residues at position 2 and 9. Functionally, allele A*01:01: Presents a restricted peptide repertoire including viral epitopes derived from IAV NP/nucleoprotein (CTELKLSDY), IAV PB1/polymerase basic protein 1 (VSDGGPNLY), HAdV-11 capsid L3/hexon protein (LTDLGQNLLY), SARS-CoV-2 3a/ORF3a (FTSDYYQLY) as well as tumor peptide antigens including MAGE1 (EADPTGHSY), MAGEA3 (EVDPIGHLY) and WT1 (TSEKRPFMCAY), all having in common a canonical motif with a negatively charged Asp or Glu residue at position 3 and a Tyr anchor residue at the C-terminus. A number of HLA-A*01:01-restricted peptides carry a post-translational modification with oxidation and N-terminal acetylation being the most frequent. Fails to present highly immunogenic peptides from the EBV latent antigens. Its function is as follows. Allele A*02:01: A major allele in human populations, presents immunodominant viral epitopes derived from IAV M/matrix protein 1 (GILGFVFTL), HIV-1 env (TLTSCNTSV), HIV-1 gag-pol (ILKEPVHGV), HTLV-1 Tax (LLFGYPVYV), HBV C/core antigen (FLPSDFFPS), HCMV UL83/pp65 (NLVPMVATV) as well as tumor peptide antigens including MAGEA4 (GVYDGREHTV), WT1 (RMFPNAPYL) and CTAG1A/NY-ESO-1 (SLLMWITQC), all having in common hydrophobic amino acids at position 2 and at the C-terminal anchors. Allele A*03:01: Presents viral epitopes derived from IAV NP (ILRGSVAHK), HIV-1 nef (QVPLRPMTYK), HIV-1 gag-pol (AIFQSSMTK), SARS-CoV-2 N/nucleoprotein (KTFPPTEPK) as well as tumor peptide antigens including PMEL (LIYRRRLMK), NODAL (HAYIQSLLK), TRP-2 (RMYNMVPFF), all having in common hydrophobic amino acids at position 2 and Lys or Arg anchor residues at the C-terminus. May also display spliced peptides resulting from the ligation of two separate proteasomal cleavage products that are not contiguous in the parental protein. In terms of biological role, allele A*11:01: Presents several immunodominant epitopes derived from HIV-1 gag-pol and HHV-4 EBNA4, containing the peptide motif with Val, Ile, Thr, Leu, Tyr or Phe at position 2 and Lys anchor residue at the C-terminus. Important in the control of HIV-1, EBV and HBV infections. Presents an immunodominant epitope derived from SARS-CoV-2 N/nucleoprotein (KTFPPTEPK). Functionally, allele A*23:01: Interacts with natural killer (NK) cell receptor KIR3DL1 and may contribute to functional maturation of NK cells and self-nonself discrimination during innate immune response. Its function is as follows. Allele A*24:02: Presents viral epitopes derived from HIV-1 nef (RYPLTFGWCF), EBV lytic- and latent-cycle antigens BRLF1 (TYPVLEEMF), BMLF1 (DYNFVKQLF) and LMP2 (IYVLVMLVL), SARS-CoV nucleocapsid/N (QFKDNVILL), as well as tumor peptide antigens including PRAME (LYVDSLFFL), all sharing a common signature motif, namely an aromatic residue Tyr or Phe at position 2 and a nonhydrophobic anchor residue Phe, Leu or Iso at the C-terminus. Interacts with natural killer (NK) cell receptor KIR3DL1 and may contribute to functional maturation of NK cells and self-nonself discrimination during innate immune response. Allele A*26:01: Presents several epitopes derived from HIV-1 gag-pol (EVIPMFSAL, ETKLGKAGY) and env (LVSDGGPNLY), carrying as anchor residues preferentially Glu at position 1, Val or Thr at position 2 and Tyr at the C-terminus. In terms of biological role, allele A*29:02: Presents peptides having a common motif, namely a Glu residue at position 2 and Tyr or Leu anchor residues at the C-terminus. Functionally, allele A*32:01: Interacts with natural killer (NK) cell receptor KIR3DL1 and may contribute to functional maturation of NK cells and self-nonself discrimination during innate immune response. Its function is as follows. Allele A*68:01: Presents viral epitopes derived from IAV NP (KTGGPIYKR) and HIV-1 tat (ITKGLGISYGR), having a common signature motif namely, Val or Thr at position 2 and positively charged residues Arg or Lys at the C-terminal anchor. Allele A*74:01: Presents immunodominant HIV-1 epitopes derived from gag-pol (GQMVHQAISPR, QIYPGIKVR) and rev (RQIHSISER), carrying an aliphatic residue at position 2 and Arg anchor residue at the C-terminus. May contribute to viral load control in chronic HIV-1 infection. The chain is HLA class I histocompatibility antigen, A alpha chain from Homo sapiens (Human).